We begin with the raw amino-acid sequence, 153 residues long: D-aminoacyl-tRNA deacylase (153 aa).

The Gly-cisPro motif, important for rejection of L-amino acids signature appears at 142–143; the sequence is GP.

The protein belongs to the DTD family. Homodimer.

It localises to the cytoplasm. The enzyme catalyses glycyl-tRNA(Ala) + H2O = tRNA(Ala) + glycine + H(+). The catalysed reaction is a D-aminoacyl-tRNA + H2O = a tRNA + a D-alpha-amino acid + H(+). In terms of biological role, an aminoacyl-tRNA editing enzyme that deacylates mischarged D-aminoacyl-tRNAs. Also deacylates mischarged glycyl-tRNA(Ala), protecting cells against glycine mischarging by AlaRS. Acts via tRNA-based rather than protein-based catalysis; rejects L-amino acids rather than detecting D-amino acids in the active site. By recycling D-aminoacyl-tRNA to D-amino acids and free tRNA molecules, this enzyme counteracts the toxicity associated with the formation of D-aminoacyl-tRNA entities in vivo and helps enforce protein L-homochirality. In Acidovorax ebreus (strain TPSY) (Diaphorobacter sp. (strain TPSY)), this protein is D-aminoacyl-tRNA deacylase.